Reading from the N-terminus, the 192-residue chain is Ribosome maturation factor RimM (192 aa).

Positions 99–186 (ADEYHVSELV…RIEIAPPPGL (88 aa)) constitute a PRC barrel domain.

This sequence belongs to the RimM family. Binds ribosomal protein uS19.

It localises to the cytoplasm. Its function is as follows. An accessory protein needed during the final step in the assembly of 30S ribosomal subunit, possibly for assembly of the head region. Essential for efficient processing of 16S rRNA. May be needed both before and after RbfA during the maturation of 16S rRNA. It has affinity for free ribosomal 30S subunits but not for 70S ribosomes. This Microcystis aeruginosa (strain NIES-843 / IAM M-2473) protein is Ribosome maturation factor RimM.